We begin with the raw amino-acid sequence, 649 residues long: MFEIKARDAMGRLGVITINGKKIETPTIMPVIHPNPKKQTVSMDLINKLADVVITNSYITYTTPELREIAETKGIHELIDFKNVVVTDSGSFQLSVYGDVNVGPMEIIDFQEKIGVDVGTILDIPTGPDVSREKAESDLLETFKRAKDSIKRRKEMGYKLALNGTIQGSKYLDLRQKSAEVMGKMDFDIYPIGAVVPLMEDYRYREVAEVILNSKMHLPTNKPVHLFGCGHPMLFALSVALGCDLFDSAAYALYAKNGRYLTAEGTLHLEDMKDLKSFPCTCKVCSEYTPKQLFNLEEKEKTRLLAEHNLYVTFEEIDRIKNAIKEGNLWELVEERCRSHPKLLNGLRVISKYMDFIEKHDPVSKKSGFFYTGYESMDRPEIYRHKQRLERIQYDKIYVTSVSENTSKPYHENLSNVPCDVDVLIKDSVFGLVPLNIDTMYPLAQNEVPDLYDFEKKYNNEFVSEFREKHTEKILDISTYNYYINHYGKKKDCDKINPDIFRIGKMLEYQYGAKILDDELMGKVKSRRSKNTGRIRNLLLEKEVLFTLRANDNFLIPAKYGAELLHEKLEFPNYRIVIDSSVEEFARAGKSVYSKFVKDCDHELRPFEEVLIVNSDDDLLAYGTTILNGQELMEFDYGVAATLRGGIKK.

Asp88 acts as the Nucleophile in catalysis. Substrate contacts are provided by Asp123 and Ala194. 3 residues coordinate Zn(2+): Cys280, Cys282, and Cys285. One can recognise a PUA domain in the interval 573–648 (NYRIVIDSSV…VAATLRGGIK (76 aa)).

This sequence belongs to the archaeosine tRNA-ribosyltransferase family. Zn(2+) serves as cofactor.

It carries out the reaction guanosine(15) in tRNA + 7-cyano-7-deazaguanine = 7-cyano-7-carbaguanosine(15) in tRNA + guanine. It participates in tRNA modification; archaeosine-tRNA biosynthesis. Its function is as follows. Exchanges the guanine residue with 7-cyano-7-deazaguanine (preQ0) at position 15 in the dihydrouridine loop (D-loop) of archaeal tRNAs. This chain is tRNA-guanine(15) transglycosylase, found in Methanococcus maripaludis (strain C5 / ATCC BAA-1333).